A 210-amino-acid polypeptide reads, in one-letter code: 3-hexulose-6-phosphate synthase (210 aa).

This sequence belongs to the HPS/KGPDC family. HPS subfamily.

The catalysed reaction is D-ribulose 5-phosphate + formaldehyde = D-arabino-hex-3-ulose 6-phosphate. It functions in the pathway one-carbon metabolism; formaldehyde assimilation via RuMP pathway; D-fructose 6-phosphate from D-ribulose 5-phosphate and formaldehyde: step 1/2. In terms of biological role, catalyzes the condensation of ribulose 5-phosphate with formaldehyde to form 3-hexulose 6-phosphate. The chain is 3-hexulose-6-phosphate synthase from Staphylococcus haemolyticus (strain JCSC1435).